The chain runs to 425 residues: Serine--tRNA ligase (425 aa).

Residue 231–233 (TAE) coordinates L-serine. 262 to 264 (RSE) is an ATP binding site. Residue E285 participates in L-serine binding. 349–352 (EISS) is an ATP binding site. S385 contributes to the L-serine binding site.

The protein belongs to the class-II aminoacyl-tRNA synthetase family. Type-1 seryl-tRNA synthetase subfamily. Homodimer. The tRNA molecule binds across the dimer.

It is found in the cytoplasm. It catalyses the reaction tRNA(Ser) + L-serine + ATP = L-seryl-tRNA(Ser) + AMP + diphosphate + H(+). The enzyme catalyses tRNA(Sec) + L-serine + ATP = L-seryl-tRNA(Sec) + AMP + diphosphate + H(+). It participates in aminoacyl-tRNA biosynthesis; selenocysteinyl-tRNA(Sec) biosynthesis; L-seryl-tRNA(Sec) from L-serine and tRNA(Sec): step 1/1. In terms of biological role, catalyzes the attachment of serine to tRNA(Ser). Is also able to aminoacylate tRNA(Sec) with serine, to form the misacylated tRNA L-seryl-tRNA(Sec), which will be further converted into selenocysteinyl-tRNA(Sec). This chain is Serine--tRNA ligase, found in Exiguobacterium sibiricum (strain DSM 17290 / CCUG 55495 / CIP 109462 / JCM 13490 / 255-15).